Reading from the N-terminus, the 188-residue chain is MKISANSIRTGNILVYNNDLWVVSKTPEHTQPGKGGAYVQVEMKNLKTGTKRNERFSSANYLEKAELEQKDYQFLYFEGDDLVLMDTKHFDQINISKEMLEEKLSFLTENMIVKVEFYNDKPLNIELPPTVILEISETDPVIKGATATASYKPAILENGIKVKVPQYLEIGEKIVVKTDDMTYVERAK.

It belongs to the elongation factor P family.

Its subcellular location is the cytoplasm. It functions in the pathway protein biosynthesis; polypeptide chain elongation. Involved in peptide bond synthesis. Stimulates efficient translation and peptide-bond synthesis on native or reconstituted 70S ribosomes in vitro. Probably functions indirectly by altering the affinity of the ribosome for aminoacyl-tRNA, thus increasing their reactivity as acceptors for peptidyl transferase. This chain is Elongation factor P, found in Rickettsia africae (strain ESF-5).